The primary structure comprises 71 residues: MAKPDNRNDNVEKLQEMVQDTIENLEEAHETLQNNSLSRDQRQAIMEKNKRREESIRSFRNEIKDEYQDLH.

The tract at residues Glu30–Ile56 is disordered. Over residues Arg39–Ile56 the composition is skewed to basic and acidic residues.

This sequence belongs to the Tlp family.

The polypeptide is Protein Tlp homolog (Desulforamulus reducens (strain ATCC BAA-1160 / DSM 100696 / MI-1) (Desulfotomaculum reducens)).